We begin with the raw amino-acid sequence, 797 residues long: Outer membrane protein assembly factor BamA (797 aa).

The N-terminal stretch at 1-21 is a signal peptide; it reads MKLKQIASALMMLGISPLALA. POTRA domains are found at residues 23–90, 91–171, 174–262, 265–344, and 347–421; these read FTIQ…VIER, PTIG…IDEG, AKIT…VHEG, FRWG…IEPG, and IYVN…LTER.

This sequence belongs to the BamA family. In terms of assembly, part of the Bam complex.

The protein resides in the cell outer membrane. Its function is as follows. Part of the outer membrane protein assembly complex, which is involved in assembly and insertion of beta-barrel proteins into the outer membrane. The sequence is that of Outer membrane protein assembly factor BamA from Neisseria meningitidis serogroup B (strain ATCC BAA-335 / MC58).